Reading from the N-terminus, the 330-residue chain is Tryptophan--tRNA ligase (330 aa).

Residues glutamine 6 to threonine 8 and glycine 14 to asparagine 15 contribute to the ATP site. Residues proline 7–asparagine 15 carry the 'HIGH' region motif. Aspartate 130 provides a ligand contact to L-tryptophan. ATP contacts are provided by residues glycine 142–aspartate 144, valine 185, and lysine 194–serine 198. The 'KMSKS' region signature appears at lysine 194 to serine 198.

The protein belongs to the class-I aminoacyl-tRNA synthetase family. Homodimer.

It localises to the cytoplasm. The enzyme catalyses tRNA(Trp) + L-tryptophan + ATP = L-tryptophyl-tRNA(Trp) + AMP + diphosphate + H(+). Functionally, catalyzes the attachment of tryptophan to tRNA(Trp). The sequence is that of Tryptophan--tRNA ligase from Thermosynechococcus vestitus (strain NIES-2133 / IAM M-273 / BP-1).